We begin with the raw amino-acid sequence, 409 residues long: Secreted LysM effector Blys2 (409 aa).

The first 20 residues, 1–20 (MTRFTTTLVAALAGANLAAA), serve as a signal peptide directing secretion. A LysM 1 domain is found at 24 to 71 (YKWRAHAGDTCDSLSSDWSVQVSDFIKWNPSVGANCSNGVTAGQEYCV). The N-linked (GlcNAc...) asparagine glycan is linked to Asn58. The disordered stretch occupies residues 74 to 111 (NGAGSKPTTPPTGSPTTLTTAVTTASSTPTQPTDGAPS). The span at 87–106 (SPTTLTTAVTTASSTPTQPT) shows a compositional bias: low complexity. LysM domains lie at 129–176 (AWYK…YVCV), 206–253 (KWYK…FVCV), 283–330 (KFYK…YYCI), and 357–405 (KYYK…YICV).

Belongs to the secreted LysM effector family.

It localises to the secreted. Its subcellular location is the cell wall. Its function is as follows. Secreted effector that enables the plant pathogenic fungus to manipulate host defenses for successful infection. Required for the full virulence to infect insect hosts. In contrast to Blys5, Blys2 is not able to protect fungal hyphae against the hydrolytic activity of chitinase but plays an important role in evasion of insect immunities. Binds chitin. Coats and protects the cell walls of insect pathogens from host cell recognition. The polypeptide is Secreted LysM effector Blys2 (Beauveria bassiana (strain ARSEF 2860) (White muscardine disease fungus)).